We begin with the raw amino-acid sequence, 223 residues long: 2-C-methyl-D-erythritol 4-phosphate cytidylyltransferase (223 aa).

This sequence belongs to the IspD/TarI cytidylyltransferase family. IspD subfamily.

The enzyme catalyses 2-C-methyl-D-erythritol 4-phosphate + CTP + H(+) = 4-CDP-2-C-methyl-D-erythritol + diphosphate. Its pathway is isoprenoid biosynthesis; isopentenyl diphosphate biosynthesis via DXP pathway; isopentenyl diphosphate from 1-deoxy-D-xylulose 5-phosphate: step 2/6. Catalyzes the formation of 4-diphosphocytidyl-2-C-methyl-D-erythritol from CTP and 2-C-methyl-D-erythritol 4-phosphate (MEP). The sequence is that of 2-C-methyl-D-erythritol 4-phosphate cytidylyltransferase from Prochlorococcus marinus (strain MIT 9515).